A 64-amino-acid polypeptide reads, in one-letter code: Large ribosomal subunit protein bL35 (64 aa).

Composition is skewed to basic residues over residues 1–15 and 23–33; these read MPKA…KRFR and VRQKANRRHLL. Residues 1–47 are disordered; sequence MPKAKTHSGASKRFRTTGSGKIVRQKANRRHLLEHKPTSRTRRLDGR. The span at 34 to 46 shows a compositional bias: basic and acidic residues; sequence EHKPTSRTRRLDG.

This sequence belongs to the bacterial ribosomal protein bL35 family.

The polypeptide is Large ribosomal subunit protein bL35 (Mycobacteroides abscessus (strain ATCC 19977 / DSM 44196 / CCUG 20993 / CIP 104536 / JCM 13569 / NCTC 13031 / TMC 1543 / L948) (Mycobacterium abscessus)).